The primary structure comprises 1073 residues: MAWVKFLRKPGGNLGKVYQPGSMLSLAPTKGLLNEPGQNSCFLNSAVQVLWQLDIFRRSLRVLTGHVCQGDACIFCALKTIFAQFQHSREKALPSDNIRHALAESFKDEQRFQLGLMDDAAECFENMLERIHFHIVPSRDADMCTSKSCITHQKFAMTLYEQCVCRSCGASSDPLPFTEFVRYISTTALCNEVERMLERHERFKPEMFAELLQAANTTDDYRKCPSNCGQKIKIRRVLMNCPEIVTIGLVWDSEHSDLTEAVVRNLATHLYLPGLFYRVTDENAKNSELNLVGMICYTSQHYCAFAFHTKSSKWVFFDDANVKEIGTRWKDVVSKCIRCHFQPLLLFYANPDGTAVSTEDALRQVISWSHYKSVAENMGCEKPVIHKSDNLKENGFGDQAKQRENQKFPTDNISSSNRSHSHTGVGKGPAKLSHIDQREKIKDISRECALKAIEQKNLLSSQRKDLEKGQRKDLGRHRDLVDEDLSHFQSGSPPAPNGFKQHGNPHLYHSQGKGSYKHDRVVPQSRASAQIISSSKSQILAPGEKITGKVKSDNGTGYDTDSSQDSRDRGNSCDSSSKSRNRGWKPMRETLNVDSIFSESEKRQHSPRHKPNISNKPKSSKDPSFSNWPKENPKQKGLMTIYEDEMKQEIGSRSSLESNGKGAEKNKGLVEGKVHGDNWQMQRTESGYESSDHISNGSTNLDSPVIDGNGTVMDISGVKETVCFSDQITTSNLNKERGDCTSLQSQHHLEGFRKELRNLEAGYKSHEFHPESHLQIKNHLIKRSHVHEDNGKLFPSSSLQIPKDHNAREHIHQSDEQKLEKPNECKFSEWLNIENSERTGLPFHVDNSASGKRVNSNEPSSLWSSHLRTVGLKPETAPLIQQQNIMDQCYFENSLSTECIIRSASRSDGCQMPKLFCQNLPPPLPPKKYAITSVPQSEKSESTPDVKLTEVFKATSHLPKHSLSTASEPSLEVSTHMNDERHKETFQVRECFGNTPNCPSSSSTNDFQANSGAIDAFCQPELDSISTCPNETVSLTTYFSVDSCMTDTYRLKYHQRPKLSFPESSGFCNNSLS.

The USP domain maps to 30-351; it reads KGLLNEPGQN…QPLLLFYANP (322 aa). Cys-41 (nucleophile) is an active-site residue. Residues His-66, Cys-68, Cys-73, Cys-76, His-132, Cys-144, Cys-149, His-152, Cys-165, Cys-168, Cys-224, and Cys-228 each coordinate Zn(2+). His-301 (proton acceptor) is an active-site residue. Disordered regions lie at residues 391–437 and 485–636; these read LKEN…HIDQ and LSHF…PKQK. Positions 407-418 are enriched in polar residues; the sequence is KFPTDNISSSNR. Residues 524–541 show a composition bias toward low complexity; sequence QSRASAQIISSSKSQILA. Residues 553-563 show a composition bias toward polar residues; the sequence is DNGTGYDTDSS. Positions 612-627 are enriched in low complexity; the sequence is NISNKPKSSKDPSFSN.

Belongs to the peptidase C19 family. As to quaternary structure, interacts (via the C-terminal region) with the heterodimer TJP1:TJP2. In terms of tissue distribution, expressed predominantly in skeletal muscle and heart.

It is found in the cell junction. Its subcellular location is the tight junction. It catalyses the reaction Thiol-dependent hydrolysis of ester, thioester, amide, peptide and isopeptide bonds formed by the C-terminal Gly of ubiquitin (a 76-residue protein attached to proteins as an intracellular targeting signal).. Functionally, deubiquitinase that mediates 'Lys-63'-linked deubiquitination of tight junction proteins, such as MARVELD2 and LSR, and which is involved in the survival of auditory hair cells and hearing. Specifically cleaves 'Lys-63'-linked polyubiquitin chains composed of at least 3 ubiquitin molecules, while it is not able to deubiquitinate substrates with shorter ubiquitin chains: recognizes ubiquitin chain in position S2 and catalyzes en bloc cleavage of polyubiquitin chains from substrate proteins. Probably acts by modulating the barrier properties and mechanical stability of tight junctions via deubiquitination of MARVELD2 and LSR. The chain is Ubiquitin carboxyl-terminal hydrolase 53 from Homo sapiens (Human).